An 845-amino-acid chain; its full sequence is Tyrosine-protein phosphatase corkscrew (845 aa).

SH2 domains are found at residues 6–101 (WFHP…KQPL) and 111–205 (WFHG…RQPF). The 419-residue stretch at 227–645 (FWEEFESLQQ…KFVYYAVQHY (419 aa)) folds into the Tyrosine-protein phosphatase domain. The segment at 289-444 (IRLPTDGDLY…REREREMFKT (156 aa)) is PTPase insert (Cys/Ser-rich). The interval 362 to 402 (SKHKRSESSASSSPSSGSGSGPGSSGTSGVSSVNGPGTPTN) is disordered. Low complexity-rich tracts occupy residues 369–378 (SSASSSPSSG) and 388–400 (TSGV…PGTP). A Phosphoserine modification is found at S419. Substrate contacts are provided by residues D545, 583–589 (CSAGIGR), and Q630. The active-site Phosphocysteine intermediate is C583. Residues 793-824 (DSLKQQQQREEQAPAGAGKMQQPAPPLRPRPG) are disordered.

It belongs to the protein-tyrosine phosphatase family. Non-receptor class subfamily. As to quaternary structure, interacts with drpr isoform A. Expressed uniformly throughout all tissues during embryogenesis.

The protein localises to the cytoplasm. It carries out the reaction O-phospho-L-tyrosyl-[protein] + H2O = L-tyrosyl-[protein] + phosphate. In terms of biological role, required in all receptor tyrosine kinase signaling pathways. Functions downstream of the receptor tyrosine kinase torso, acting in concert with D-Raf via tailless. Also functions downstream of Egfr (epidermal growth factor receptor) and btl (fibroblast growth factor receptor). The SH2 domain suggests that csw effects its role by mediating heteromeric protein interactions. Maternally required for normal determination of cell fates at the termini of the embryo. Required for cell fate specification of the ventral ectoderm, in the developing embryonic CNS and for embryonic tracheal cell migration. Functions during imaginal development for proper formation of adult structures such as eyes, aristae, L5 wing vein and the tarsal claw. Dephosphorylates drpr isoform A which is required for the inhibition by drpr isoform A of glial cell engulfment of axonal debris produced following axonal injury. The sequence is that of Tyrosine-protein phosphatase corkscrew (csw) from Drosophila melanogaster (Fruit fly).